A 412-amino-acid polypeptide reads, in one-letter code: Ribosomal RNA large subunit methyltransferase G (412 aa).

Residues 386-412 (KAEPHENGESSSDTPNPQSSLYGGVKR) are disordered. Positions 394–406 (ESSSDTPNPQSSL) are enriched in polar residues.

The protein belongs to the methyltransferase superfamily. RlmG family.

Its subcellular location is the cytoplasm. It carries out the reaction guanosine(1835) in 23S rRNA + S-adenosyl-L-methionine = N(2)-methylguanosine(1835) in 23S rRNA + S-adenosyl-L-homocysteine + H(+). Functionally, specifically methylates the guanine in position 1835 (m2G1835) of 23S rRNA. This Shewanella sediminis (strain HAW-EB3) protein is Ribosomal RNA large subunit methyltransferase G.